We begin with the raw amino-acid sequence, 313 residues long: Olfactory receptor 4M2 (313 aa).

At Met-1 to Leu-25 the chain is on the extracellular side. N-linked (GlcNAc...) asparagine glycosylation is present at Asn-5. Residues Val-26–Ile-49 traverse the membrane as a helical segment. At Ser-50–Ser-57 the chain is on the cytoplasmic side. The chain crosses the membrane as a helical span at residues Pro-58–Pro-79. At Glu-80 to Gln-100 the chain is on the extracellular side. An intrachain disulfide couples Cys-97 to Cys-189. A helical transmembrane segment spans residues Leu-101 to Phe-120. At Asp-121–Arg-139 the chain is on the cytoplasmic side. Residues Leu-140 to Ile-158 form a helical membrane-spanning segment. Residues Gln-159–Glu-195 are Extracellular-facing. The helical transmembrane segment at Glu-196–Ala-219 threads the bilayer. Over Phe-220–Arg-237 the chain is Cytoplasmic. A helical transmembrane segment spans residues Ala-238–Tyr-260. Residues Ala-261–Lys-271 are Extracellular-facing. Residues Val-272–Leu-291 traverse the membrane as a helical segment. Over Arg-292–Lys-313 the chain is Cytoplasmic.

The protein belongs to the G-protein coupled receptor 1 family.

It is found in the cell membrane. Its function is as follows. Odorant receptor. This Homo sapiens (Human) protein is Olfactory receptor 4M2 (OR4M2).